A 577-amino-acid chain; its full sequence is 5'-AMP-activated protein kinase subunit gamma (577 aa).

Residues 45 to 226 (QSEGVGGGEL…NNNNSNSNNN (182 aa)) are disordered. The span at 58–88 (NNNTTNNNTPTNTTTTTNTNTTTMNNSNNNN) shows a compositional bias: low complexity. 2 stretches are compositionally biased toward polar residues: residues 106–121 (SIEQ…SQDG) and 138–155 (ESQS…NNNM). The span at 165–226 (STDNKSSTNT…NNNNSNSNNN (62 aa)) shows a compositional bias: low complexity. CBS domains follow at residues 279-341 (VIPI…KKPK), 364-426 (ERPS…QLPE), 438-499 (IGTF…LSPS), and 517-574 (QRPE…DVKS).

Belongs to the 5'-AMP-activated protein kinase gamma subunit family.

Its function is as follows. AMPK may be responsible for the regulation of fatty acid synthesis by phosphorylation of acetyl-CoA carboxylase. This is 5'-AMP-activated protein kinase subunit gamma (prkag) from Dictyostelium discoideum (Social amoeba).